A 261-amino-acid polypeptide reads, in one-letter code: MRILITNDDGINAPGLMVLHEIATRLAGQDGEVWTVAPAFEQSGVGHCISYTRPMMVAQMGPRRFAAEGSPADCVLAGLHDVMKDSPPDLVLSGVNRGNNSAENTLYSGTIGGAMEAALQGLPAIALSQYYGPRNNAIENPFEASAQHGVDVVQRILAHTPQETGGYRLFYNVNFPPVPGDEVLGIRLATQGFREGLGFSTEPHNAPSGRRFLWIKGGDQHRPTAPGSDAQLNLEGYISVTPMRADLTAHDMMAPLAGINT.

A divalent metal cation contacts are provided by D8, D9, S43, and N96.

The protein belongs to the SurE nucleotidase family. It depends on a divalent metal cation as a cofactor.

It localises to the cytoplasm. The catalysed reaction is a ribonucleoside 5'-phosphate + H2O = a ribonucleoside + phosphate. Its function is as follows. Nucleotidase that shows phosphatase activity on nucleoside 5'-monophosphates. This Roseobacter denitrificans (strain ATCC 33942 / OCh 114) (Erythrobacter sp. (strain OCh 114)) protein is 5'-nucleotidase SurE.